Consider the following 934-residue polypeptide: 2-oxoglutarate dehydrogenase E1 component (934 aa).

Residues 515–537 (RAAQDKIDKSDKMDNPDMERPES) are compositionally biased toward basic and acidic residues. The interval 515–544 (RAAQDKIDKSDKMDNPDMERPESLQEPLQS) is disordered.

The protein belongs to the alpha-ketoglutarate dehydrogenase family. In terms of assembly, homodimer. Part of the 2-oxoglutarate dehydrogenase (OGDH) complex composed of E1 (2-oxoglutarate dehydrogenase), E2 (dihydrolipoamide succinyltransferase) and E3 (dihydrolipoamide dehydrogenase); the complex contains multiple copies of the three enzymatic components (E1, E2 and E3). Requires thiamine diphosphate as cofactor.

The catalysed reaction is N(6)-[(R)-lipoyl]-L-lysyl-[protein] + 2-oxoglutarate + H(+) = N(6)-[(R)-S(8)-succinyldihydrolipoyl]-L-lysyl-[protein] + CO2. E1 component of the 2-oxoglutarate dehydrogenase (OGDH) complex which catalyzes the decarboxylation of 2-oxoglutarate, the first step in the conversion of 2-oxoglutarate to succinyl-CoA and CO(2). The sequence is that of 2-oxoglutarate dehydrogenase E1 component from Staphylococcus haemolyticus (strain JCSC1435).